A 380-amino-acid chain; its full sequence is MVAGAEVMHQVVPLLEASFHRRCSVKGVDEVSPPVEEMSPEAASEAAIEVPELMVKAPVESLQFSPNIRSGSFADIGPRRYMEDEHIRIDDLSGHLGSLLMCPAPNAFYGVFDGHGGPDAAAYMKRHAIRLFFEDSEFPQALEEDESFYESVEKSIHNAFLSADLALADDLAISRSSGTTALAALIFGRQLLVANAGDCRAVLCRKGVAVEMSRDHRPTYDAEHERITECGGYIEDGYLNGVLSVTRALGDWDMKMPQGSRSPLIAEPEFQQTTLTEDDEFLIIGCDGIWDVMSSQHAVTIVRKGLRRHDDPERCARELAMEAKRLQTFDNLTVIVICFGSELGGGSPSSEQAPIRRVRCCKSLSSEALCNLKKWLEPNE.

One can recognise a PPM-type phosphatase domain in the interval 69-339 (RSGSFADIGP…DNLTVIVICF (271 aa)). Residues Asp113, Gly114, Asp287, and Asp330 each coordinate Mn(2+).

This sequence belongs to the PP2C family. Mg(2+) serves as cofactor. It depends on Mn(2+) as a cofactor.

The enzyme catalyses O-phospho-L-seryl-[protein] + H2O = L-seryl-[protein] + phosphate. It carries out the reaction O-phospho-L-threonyl-[protein] + H2O = L-threonyl-[protein] + phosphate. The polypeptide is Probable protein phosphatase 2C 2 (Oryza sativa subsp. japonica (Rice)).